The following is a 1003-amino-acid chain: Alpha-1,4 glucan phosphorylase L isozyme, chloroplastic/amyloplastic (1003 aa).

The N-terminal 64 residues, 1–64 (MASMTMRFHP…RRRSAFSVKC (64 aa)), are a transit peptide targeting the chloroplast. 2 disordered regions span residues 71 to 91 (KQKV…SSFA) and 526 to 593 (SSEE…KKLP). Residues 537 to 553 (GEEEETSKEGGEEEEEK) show a composition bias toward acidic residues. The segment covering 569 to 580 (EVEKAIAEKDGT) has biased composition (basic and acidic residues). Position 849 is an N6-(pyridoxal phosphate)lysine (lysine 849).

Belongs to the glycogen phosphorylase family. Pyridoxal 5'-phosphate is required as a cofactor. Found predominantly in cotyledons and early seed coat.

It localises to the plastid. The protein resides in the chloroplast. The protein localises to the amyloplast. The catalysed reaction is [(1-&gt;4)-alpha-D-glucosyl](n) + phosphate = [(1-&gt;4)-alpha-D-glucosyl](n-1) + alpha-D-glucose 1-phosphate. Functionally, phosphorylase is an important allosteric enzyme in carbohydrate metabolism. Enzymes from different sources differ in their regulatory mechanisms and in their natural substrates. However, all known phosphorylases share catalytic and structural properties. Its function is as follows. The L isoform exhibits higher affinity for unbranched substrates such as glucan-like amylose and maltodextrin. The protein is Alpha-1,4 glucan phosphorylase L isozyme, chloroplastic/amyloplastic (PHO1) of Vicia faba (Broad bean).